We begin with the raw amino-acid sequence, 554 residues long: GPI alpha-1,2-mannosyltransferase 3 (554 aa).

N-linked (GlcNAc...) asparagine glycosylation is present at N26. The next 9 helical transmembrane spans lie at 63-83, 136-156, 192-212, 224-244, 255-275, 315-335, 340-360, 362-382, and 387-407; these read LLLF…TSFV, VQLL…VADV, LTNT…PLEG, LVAL…PLLF, DLIL…SLMI, GFPV…YLAP, ILLV…HKEF, FIYP…THLK, and PALS…GLVH. Residue N427 is glycosylated (N-linked (GlcNAc...) asparagine).

This sequence belongs to the glycosyltransferase 22 family. PIGB subfamily.

Its subcellular location is the endoplasmic reticulum membrane. It functions in the pathway glycolipid biosynthesis; glycosylphosphatidylinositol-anchor biosynthesis. Alpha-1,2-mannosyltransferase that catalyzes the transfer of the third mannose, via an alpha-1,2 bond, from a dolichol-phosphate-mannose (Dol-P-Man) to an alpha-D-Man-(1-&gt;6)-2-PEtn-alpha-D-Man-(1-&gt;4)-alpha-D-GlcN-(1-&gt;6)-(1-radyl,2-acyl-sn-glycero-3-phospho)-2-acyl-inositol intermediate to generate an alpha-D-Man-(1-&gt;2)-alpha-D-Man-(1-&gt;6)-2-PEtn-alpha-D-Man-(1-&gt;4)-alpha-D-GlcN-(1-&gt;6)-(1-radyl,2-acyl-sn-glycero-3-phospho)-2-acyl-inositol (also termed H6) and participates in the nineth step of the glycosylphosphatidylinositol-anchor biosynthesis. May also add the third mannose to an alpha-D-Man-(1-&gt;6)-alpha-D-Man-(1-&gt;4)-alpha-D-GlcN-(1-&gt;6)-(1-radyl,2-acyl-sn-glycero-3-phospho)-2-acyl-inositol (also termed H3) intermediate generating an alpha-D-Man-(1-&gt;2)-alpha-D-Man-(1-&gt;6)-alpha-D-Man-(1-&gt;4)-alpha-D-GlcN-(1-&gt;6)-(1-radyl,2-acyl-sn-glycero-3-phospho)-2-acyl-inositol (also termed H4). The polypeptide is GPI alpha-1,2-mannosyltransferase 3 (Homo sapiens (Human)).